The sequence spans 434 residues: MEVRPKEGWNHADFVYCEDTEFAPGKPTVNADEEVGGPQICRVCGDKATGYHFNVMTCEGCKGFFRRAMKRNARLRCPFRKGACEITRKTRRQCQACRLRKCLESGMKKEMIMSDAAVEERRALIKRKKRERIGTQPPGVQGLTEEQRMMIRELMDAQMKTFDTTFSHFKNFRLPGVLSSGCEMPESLQAPSREEAAKWNQVRKDLWSVKVSVQLRGEDGSVWNYKPPADNGGKEIFSLLPHMADMSTYMFKGIINFAKVISYFRDLPIEDQISLLKGATFELCQLRFNTVFNAETGTWECGRLSYCLEDPAGGFQQLLLEPMLKFHYMLKKLQLHEEEYVLMQAISLFSPDRPGVVQHRVVDQLQEQYAITLKSYIECNRPQPAHRFLFLKIMAMLTELRSINAQHTQRLLRIQDIHPFATPLMQELFGITGS.

Positions 38 to 107 form a DNA-binding region, nuclear receptor; that stretch reads PQICRVCGDK…RLRKCLESGM (70 aa). 2 consecutive NR C4-type zinc fingers follow at residues 41-61 and 77-102; these read CRVC…CEGC and CPFR…LRKC. A Bipartite nuclear localization signal motif is present at residues 66–92; the sequence is RRAMKRNARLRCPFRKGACEITRKTRR. The segment at 108-145 is hinge; it reads KKEMIMSDAAVEERRALIKRKKRERIGTQPPGVQGLTE. The NR LBD domain maps to 146 to 433; that stretch reads EQRMMIRELM…LMQELFGITG (288 aa). Hyperforin is bound by residues Ser247, 285–288, and His407; that span reads QLRF.

The protein belongs to the nuclear hormone receptor family. NR1 subfamily. Heterodimer with RXRA. Interacts with NCOA1. Interacts (via domain NR LBD) with CRY1 and CRY2 in a ligand-dependent manner.

It localises to the nucleus. In terms of biological role, nuclear receptor that binds and is activated by a variety of endogenous and xenobiotic compounds. Transcription factor that activates the transcription of multiple genes involved in the metabolism and secretion of potentially harmful xenobiotics, endogenous compounds and drugs. Response to specific ligands is species-specific, due to differences in the ligand-binding domain. Activated by naturally occurring steroids, such as pregnenolone and progesterone. Binds to a response element in the promoters of the CYP3A4 and ABCB1/MDR1 genes. This chain is Nuclear receptor subfamily 1 group I member 2 (NR1I2), found in Macaca mulatta (Rhesus macaque).